The following is a 322-amino-acid chain: Arginase-1 (322 aa).

Low complexity predominate over residues 1-12 (MSSKSKSIGIIG). A disordered region spans residues 1–26 (MSSKSKSIGIIGAPFSKGQPRGGVEE). At Ser7 the chain carries Phosphoserine. Lys17 is subject to N6-succinyllysine. The residue at position 62 (Ser62) is a Phosphoserine. Residues His101, Asp124, His126, and Asp128 each contribute to the Mn(2+) site. Substrate-binding positions include 126 to 130 (HTDIN) and 137 to 139 (SGN). Residue Ser163 is modified to Phosphoserine. Asp183 contributes to the substrate binding site. Mn(2+)-binding residues include Asp232 and Asp234. Substrate is bound by residues Thr246 and Glu277.

The protein belongs to the arginase family. As to quaternary structure, homotrimer. Interacts with CMTM6. Mn(2+) is required as a cofactor.

It is found in the cytoplasm. It catalyses the reaction L-arginine + H2O = urea + L-ornithine. Its pathway is nitrogen metabolism; urea cycle; L-ornithine and urea from L-arginine: step 1/1. This chain is Arginase-1 (ARG1), found in Oryctolagus cuniculus (Rabbit).